Consider the following 664-residue polypeptide: Macoilin (664 aa).

The next 4 helical transmembrane spans lie at 28–48, 75–95, 120–140, and 154–174; these read TFLY…DFVL, AFSV…LLFI, VCLP…AIRF, and FAAH…KSYV. Residues 253 to 265 show a composition bias toward basic and acidic residues; that stretch reads REKGKEKDKDAKK. Residues 253-274 are disordered; sequence REKGKEKDKDAKKHNLGINNNN. S305 carries the post-translational modification Phosphoserine. Residues 320–348 are compositionally biased toward polar residues; the sequence is KNYKNASGVVNSSPRSHSATNGSIPSSSS. The disordered stretch occupies residues 320 to 375; that stretch reads KNYKNASGVVNSSPRSHSATNGSIPSSSSKNEKKQKCTSKSPSTHKDLMENCIPNN. N-linked (GlcNAc...) asparagine glycosylation is present at N324. S332 is subject to Phosphoserine. N340 and N452 each carry an N-linked (GlcNAc...) asparagine glycan. The segment at 630–664 is disordered; sequence TSPLSPVSPHYSSKFVETSPSGLDPNASVYQPLKK. Phosphoserine is present on residues S631 and S634. An N-linked (GlcNAc...) asparagine glycan is attached at N655.

Belongs to the macoilin family.

The protein resides in the rough endoplasmic reticulum membrane. The protein localises to the nucleus membrane. Its function is as follows. Plays a role in the regulation of neuronal activity. This chain is Macoilin (MACO1), found in Canis lupus familiaris (Dog).